The primary structure comprises 156 residues: ATP synthase subunit b (156 aa).

The chain crosses the membrane as a helical span at residues 7-27 (LFAQMVVFLILAWFTMKFVWP).

It belongs to the ATPase B chain family. As to quaternary structure, F-type ATPases have 2 components, F(1) - the catalytic core - and F(0) - the membrane proton channel. F(1) has five subunits: alpha(3), beta(3), gamma(1), delta(1), epsilon(1). F(0) has three main subunits: a(1), b(2) and c(10-14). The alpha and beta chains form an alternating ring which encloses part of the gamma chain. F(1) is attached to F(0) by a central stalk formed by the gamma and epsilon chains, while a peripheral stalk is formed by the delta and b chains.

The protein resides in the cell inner membrane. In terms of biological role, f(1)F(0) ATP synthase produces ATP from ADP in the presence of a proton or sodium gradient. F-type ATPases consist of two structural domains, F(1) containing the extramembraneous catalytic core and F(0) containing the membrane proton channel, linked together by a central stalk and a peripheral stalk. During catalysis, ATP synthesis in the catalytic domain of F(1) is coupled via a rotary mechanism of the central stalk subunits to proton translocation. Functionally, component of the F(0) channel, it forms part of the peripheral stalk, linking F(1) to F(0). This Paraburkholderia phymatum (strain DSM 17167 / CIP 108236 / LMG 21445 / STM815) (Burkholderia phymatum) protein is ATP synthase subunit b.